Here is a 687-residue protein sequence, read N- to C-terminus: Protein 4.2 (687 aa).

A lipid anchor (N-myristoyl glycine) is attached at Gly2. Positions 31–39 (LFVRRGQPF) are band 3 binding. The residue at position 247 (Ser247) is a Phosphoserine.

Belongs to the transglutaminase superfamily. Transglutaminase family. As to quaternary structure, component of the ankyrin-1 complex in the erythrocyte, composed of ANK1, RHCE, RHAG, SLC4A1, EPB42, GYPA, GYPB and AQP1. Interacts with SLC4A1 (via the cytoplasmic domain); this interaction is mediated by the SLC4A1 Band 3-I dimer. Interacts with ANK1 (via ANK 1-13 repeats). Interacts with AQP1 (via the C-terminal).

The protein localises to the cell membrane. It localises to the cytoplasm. Its subcellular location is the cytoskeleton. Component of the ankyrin-1 complex, a multiprotein complex involved in the stability and shape of the erythrocyte membrane. The sequence is that of Protein 4.2 from Bos taurus (Bovine).